The primary structure comprises 396 residues: Phosphoglycerate kinase (396 aa).

Substrate contacts are provided by residues 21-23, R37, 60-63, R121, and R154; these read DFN and HLGR. ATP is bound by residues K205, G296, E327, and 353 to 356; that span reads GGDS.

Belongs to the phosphoglycerate kinase family. As to quaternary structure, monomer.

The protein resides in the cytoplasm. It catalyses the reaction (2R)-3-phosphoglycerate + ATP = (2R)-3-phospho-glyceroyl phosphate + ADP. It functions in the pathway carbohydrate degradation; glycolysis; pyruvate from D-glyceraldehyde 3-phosphate: step 2/5. This is Phosphoglycerate kinase from Anaeromyxobacter sp. (strain Fw109-5).